The following is a 712-amino-acid chain: Effector protein HopM1 (712 aa).

The interval 22 to 58 is disordered; it reads DTVPAQTAHPNAVTAGMNPPLTPDQSGSHATESSSAG. Over residues 44–57 the composition is skewed to polar residues; it reads PDQSGSHATESSSA.

Interacts with the chaperone ShcM. Interacts with host plant BIG5/ATMIN7.

The protein resides in the secreted. The protein localises to the host membrane. Involved in the suppression of basal resistance and promotion of disease symptoms in plants. Mediates the ubiquitination and degradation, via the host proteasome, of a low-abundance immunity-associated protein in Arabidopsis thaliana. May be involved in the inhibition of a host vesicle trafficking pathway. The protein is Effector protein HopM1 (hopM1) of Pseudomonas syringae pv. tomato (strain ATCC BAA-871 / DC3000).